The primary structure comprises 287 residues: MDSPEKLEKNNLVGTNKSRLGVCGWILFFLSFLLMLVTFPISVWMCLKIIKEYERAVVFRLGRIQADKAKGPGLILVLPCIDVFVKVDLRTVTCNIPPQEILTRDSVTTQVDGVVYYRIYSAVSAVANVNDVHQATFLLAQTTLRNVLGTQTLSQILSGREEIAHSIQTLLDDATELWGIRVARVEIKDVRIPVQLQRSMAAEAEATREARAKVLAAEGEMNASKSLKSASMVLAESPVALQLRYLQTLTTVATEKNSTIVFPLPMNILEGIGGISYGNNKKVTAKA.

A Phosphoserine modification is found at Ser-3. The chain crosses the membrane as a helical; Signal-anchor for type III membrane protein span at residues 25–45 (WILFFLSFLLMLVTFPISVWM). Over 46–287 (CLKIIKEYER…GNNKKVTAKA (242 aa)) the chain is Cytoplasmic. Ser-237 is modified (phosphoserine).

This sequence belongs to the band 7/mec-2 family. In terms of assembly, homodimer. Interacts with PIEZO1 and PIEZO2. As to expression, expressed by all dorsal root ganglion neurons and is selectively expressed in neuronal tissues. Detected in olfactory epithelium.

It localises to the cell membrane. Required for the function of many mechanoreceptors. Modulate mechanotransduction channels and acid-sensing ion channels (ASIC) proteins. Potentiates PIEZO1 and PIEZO2 function by increasing their sensitivity to mechanical stimulations. The protein is Stomatin-like protein 3 (Stoml3) of Mus musculus (Mouse).